Here is a 382-residue protein sequence, read N- to C-terminus: MSLNIFWFLPTHGDGKYLGTSEGARAVDHGYLQQIAQAADRLGFGGVLIPTGRSCEDSWLVAASLIPVTQHLKFLVALRPGIISPTVAARQAATLDRLSNGRALFNLVTGGDPDELAGDGLHLNHQERYEASVEFTRIWRKVLEGENVDYQGKHIQVKGAKLLYPPIQQPRPPLYFGGSSEAAQDLAAEQVELYLTWGEPPAAVAEKIAQVREKAAAQGREVRFGIRLHVIVRETNDEAWAAADRLISHLDDDTIARAQASLARFDSVGQQRMAALHGGNRDNLEVSPNLWAGVGLVRGGAGTALVGDGPTVAARVKEYADLGIDTFIFSGYPHLEESYRVAELLFPHLDVQRPEQPQTGGYVSPFGEMVANDILPKSVSQS.

The protein belongs to the SsuD family.

The enzyme catalyses an alkanesulfonate + FMNH2 + O2 = an aldehyde + FMN + sulfite + H2O + 2 H(+). Its function is as follows. Catalyzes the desulfonation of aliphatic sulfonates. In Pseudomonas putida (strain W619), this protein is Alkanesulfonate monooxygenase.